The chain runs to 220 residues: Probable nicotinate-nucleotide adenylyltransferase (220 aa).

This sequence belongs to the NadD family.

The catalysed reaction is nicotinate beta-D-ribonucleotide + ATP + H(+) = deamido-NAD(+) + diphosphate. Its pathway is cofactor biosynthesis; NAD(+) biosynthesis; deamido-NAD(+) from nicotinate D-ribonucleotide: step 1/1. Its function is as follows. Catalyzes the reversible adenylation of nicotinate mononucleotide (NaMN) to nicotinic acid adenine dinucleotide (NaAD). This Yersinia pseudotuberculosis serotype O:1b (strain IP 31758) protein is Probable nicotinate-nucleotide adenylyltransferase.